The primary structure comprises 399 residues: Interferon regulatory factor 9 (399 aa).

The segment at residues 9 to 116 (TRKLRSWIVE…EPYKVYRILP (108 aa)) is a DNA-binding region (IRF tryptophan pentad repeat). The segment at 118 to 189 (GTLPNQPRNQ…CNSELEEGAG (72 aa)) is disordered. Over residues 120-129 (LPNQPRNQKS) the composition is skewed to polar residues. Ser139 is modified (phosphoserine). Residues 148-157 (NGRTNGVVNH) show a composition bias toward polar residues. A compositionally biased stretch (low complexity) spans 171–189 (SNRSDSNSNCNSELEEGAG). Position 393 is a phosphoserine (Ser393).

The protein belongs to the IRF family. As to quaternary structure, interacts with STAT2 in the cytoplasm. Forms the interferon-stimulated gene factor 3 complex (ISGF3) with the heterodimer STAT1:STAT2; upon stimulation.

The protein localises to the nucleus. In terms of biological role, transcription factor that plays an essential role in anti-viral immunity. It mediates signaling by type I IFNs (IFN-alpha and IFN-beta). Following type I IFN binding to cell surface receptors, Jak kinases (TYK2 and JAK1) are activated, leading to tyrosine phosphorylation of STAT1 and STAT2. IRF9/ISGF3G associates with the phosphorylated STAT1:STAT2 dimer to form a complex termed ISGF3 transcription factor, that enters the nucleus. ISGF3 binds to the IFN stimulated response element (ISRE) to activate the transcription of interferon stimulated genes, which drive the cell in an antiviral state. This Mus musculus (Mouse) protein is Interferon regulatory factor 9 (Irf9).